The chain runs to 388 residues: tRNA (guanine(26)-N(2))-dimethyltransferase (388 aa).

Residues Arg-4 to Ile-383 form the Trm1 methyltransferase domain. Positions 41, 78, 94, and 123 each coordinate S-adenosyl-L-methionine. Zn(2+)-binding residues include Cys-251, Cys-254, Cys-271, and Cys-274.

It belongs to the class I-like SAM-binding methyltransferase superfamily. Trm1 family.

It carries out the reaction guanosine(26) in tRNA + 2 S-adenosyl-L-methionine = N(2)-dimethylguanosine(26) in tRNA + 2 S-adenosyl-L-homocysteine + 2 H(+). Its function is as follows. Dimethylates a single guanine residue at position 26 of a number of tRNAs using S-adenosyl-L-methionine as donor of the methyl groups. The polypeptide is tRNA (guanine(26)-N(2))-dimethyltransferase (Methanosarcina acetivorans (strain ATCC 35395 / DSM 2834 / JCM 12185 / C2A)).